A 411-amino-acid polypeptide reads, in one-letter code: Efflux pump periplasmic linker BepF (411 aa).

A coiled-coil region spans residues 118–196 (FVLQKDALQA…SLEQAQINLG (79 aa)).

Belongs to the membrane fusion protein (MFP) (TC 8.A.1) family. As to quaternary structure, probably part of a tripartite efflux pump, which is composed of an outer membrane efflux protein, an inner membrane protein and a protein that expands the periplasmic space. Could form a tripartite pump with BepC and BepG.

Its subcellular location is the periplasm. May contribute to resistance to some drugs, such as deoxycholate, sodium dodecyl sulfate and nalidixic acid, in the absence of BepD and BepE. The chain is Efflux pump periplasmic linker BepF (bepF) from Brucella suis biovar 1 (strain 1330).